We begin with the raw amino-acid sequence, 326 residues long: Probable protein phosphatase 2C 61 (326 aa).

Residues 42-316 form the PPM-type phosphatase domain; the sequence is LGSVSSLAGG…DDISVVCLSL (275 aa). The Mn(2+) site is built by aspartate 77, glycine 78, aspartate 261, and aspartate 307.

Belongs to the PP2C family. It depends on Mg(2+) as a cofactor. The cofactor is Mn(2+).

The catalysed reaction is O-phospho-L-seryl-[protein] + H2O = L-seryl-[protein] + phosphate. It catalyses the reaction O-phospho-L-threonyl-[protein] + H2O = L-threonyl-[protein] + phosphate. The polypeptide is Probable protein phosphatase 2C 61 (Arabidopsis thaliana (Mouse-ear cress)).